Consider the following 113-residue polypeptide: Molt-inhibiting hormone (113 aa).

Residues 1–35 form the signal peptide; sequence MMSRTESRYSSQRTWLLSMVVLAALWSISVQRATA. Intrachain disulfides connect cysteine 42–cysteine 79, cysteine 59–cysteine 75, and cysteine 62–cysteine 88.

This sequence belongs to the arthropod CHH/MIH/GIH/VIH hormone family.

The protein resides in the secreted. Functionally, inhibits Y-organs where molting hormone (ecdysteroid) is secreted. A molting cycle is initiated when MIH secretion diminishes or stops. The polypeptide is Molt-inhibiting hormone (Metacarcinus magister (Dungeness crab)).